Here is a 367-residue protein sequence, read N- to C-terminus: 2-aminoethylphosphonate--pyruvate transaminase (367 aa).

K194 is subject to N6-(pyridoxal phosphate)lysine.

The protein belongs to the class-V pyridoxal-phosphate-dependent aminotransferase family. PhnW subfamily. Homodimer. Pyridoxal 5'-phosphate is required as a cofactor.

It carries out the reaction (2-aminoethyl)phosphonate + pyruvate = phosphonoacetaldehyde + L-alanine. Involved in phosphonate degradation. This chain is 2-aminoethylphosphonate--pyruvate transaminase, found in Salmonella agona (strain SL483).